The chain runs to 145 residues: 3-dehydroquinate dehydratase (145 aa).

Tyrosine 23 serves as the catalytic Proton acceptor. Substrate-binding residues include asparagine 75, histidine 81, and aspartate 88. Histidine 101 acts as the Proton donor in catalysis. Substrate contacts are provided by residues 102–103 (LS) and arginine 112.

The protein belongs to the type-II 3-dehydroquinase family. In terms of assembly, homododecamer.

It catalyses the reaction 3-dehydroquinate = 3-dehydroshikimate + H2O. It participates in metabolic intermediate biosynthesis; chorismate biosynthesis; chorismate from D-erythrose 4-phosphate and phosphoenolpyruvate: step 3/7. Its function is as follows. Catalyzes a trans-dehydration via an enolate intermediate. The polypeptide is 3-dehydroquinate dehydratase (Legionella pneumophila (strain Lens)).